The primary structure comprises 297 residues: Phosphatidylserine decarboxylase proenzyme (297 aa).

Catalysis depends on charge relay system; for autoendoproteolytic cleavage activity residues aspartate 100, histidine 157, and serine 263. Serine 263 acts as the Schiff-base intermediate with substrate; via pyruvic acid; for decarboxylase activity in catalysis. Position 263 is a pyruvic acid (Ser); by autocatalysis (serine 263).

This sequence belongs to the phosphatidylserine decarboxylase family. PSD-B subfamily. Prokaryotic type I sub-subfamily. As to quaternary structure, heterodimer of a large membrane-associated beta subunit and a small pyruvoyl-containing alpha subunit. Pyruvate is required as a cofactor. Is synthesized initially as an inactive proenzyme. Formation of the active enzyme involves a self-maturation process in which the active site pyruvoyl group is generated from an internal serine residue via an autocatalytic post-translational modification. Two non-identical subunits are generated from the proenzyme in this reaction, and the pyruvate is formed at the N-terminus of the alpha chain, which is derived from the carboxyl end of the proenzyme. The autoendoproteolytic cleavage occurs by a canonical serine protease mechanism, in which the side chain hydroxyl group of the serine supplies its oxygen atom to form the C-terminus of the beta chain, while the remainder of the serine residue undergoes an oxidative deamination to produce ammonia and the pyruvoyl prosthetic group on the alpha chain. During this reaction, the Ser that is part of the protease active site of the proenzyme becomes the pyruvoyl prosthetic group, which constitutes an essential element of the active site of the mature decarboxylase.

It is found in the cell membrane. It catalyses the reaction a 1,2-diacyl-sn-glycero-3-phospho-L-serine + H(+) = a 1,2-diacyl-sn-glycero-3-phosphoethanolamine + CO2. The protein operates within phospholipid metabolism; phosphatidylethanolamine biosynthesis; phosphatidylethanolamine from CDP-diacylglycerol: step 2/2. Functionally, catalyzes the formation of phosphatidylethanolamine (PtdEtn) from phosphatidylserine (PtdSer). The polypeptide is Phosphatidylserine decarboxylase proenzyme (Haemophilus ducreyi (strain 35000HP / ATCC 700724)).